We begin with the raw amino-acid sequence, 211 residues long: Redox-sensing transcriptional repressor Rex (211 aa).

Positions 13-52 (TYLRILEELEAQGVHRTSSEQLGELAQVTAFQVRKDLSYF) form a DNA-binding region, H-T-H motif. 87–92 (GMGRLG) lines the NAD(+) pocket.

This sequence belongs to the transcriptional regulatory Rex family. As to quaternary structure, homodimer.

The protein localises to the cytoplasm. Functionally, modulates transcription in response to changes in cellular NADH/NAD(+) redox state. The sequence is that of Redox-sensing transcriptional repressor Rex from Thermus aquaticus.